We begin with the raw amino-acid sequence, 225 residues long: Glutathione S-transferase Mu 3 (225 aa).

Residues 5–92 (SSMVLGYWDI…YIARKHNMCG (88 aa)) form the GST N-terminal domain. Glutathione contacts are provided by residues 11–12 (YW), 50–54 (WLDVK), and 63–64 (NL). K54 participates in a covalent cross-link: Glycyl lysine isopeptide (Lys-Gly) (interchain with G-Cter in SUMO2). A Glycyl lysine isopeptide (Lys-Gly) (interchain with G-Cter in SUMO2) cross-link involves residue K73. 76–77 (QS) contacts glutathione. The 119-residue stretch at 94–212 (TEEEKIRVDI…QSDQFFKMPI (119 aa)) folds into the GST C-terminal domain. Y120 contributes to the substrate binding site.

It belongs to the GST superfamily. Mu family. As to quaternary structure, homodimer.

It is found in the cytoplasm. It catalyses the reaction RX + glutathione = an S-substituted glutathione + a halide anion + H(+). Its function is as follows. Conjugation of reduced glutathione to a wide number of exogenous and endogenous hydrophobic electrophiles. May govern uptake and detoxification of both endogenous compounds and xenobiotics at the testis and brain blood barriers. The chain is Glutathione S-transferase Mu 3 (GSTM3) from Macaca fuscata fuscata (Japanese macaque).